The primary structure comprises 359 residues: S-adenosylmethionine:tRNA ribosyltransferase-isomerase (359 aa).

It belongs to the QueA family. As to quaternary structure, monomer.

The protein localises to the cytoplasm. It carries out the reaction 7-aminomethyl-7-carbaguanosine(34) in tRNA + S-adenosyl-L-methionine = epoxyqueuosine(34) in tRNA + adenine + L-methionine + 2 H(+). It functions in the pathway tRNA modification; tRNA-queuosine biosynthesis. Functionally, transfers and isomerizes the ribose moiety from AdoMet to the 7-aminomethyl group of 7-deazaguanine (preQ1-tRNA) to give epoxyqueuosine (oQ-tRNA). This is S-adenosylmethionine:tRNA ribosyltransferase-isomerase from Ralstonia pickettii (strain 12J).